Consider the following 248-residue polypeptide: Ubiquinone biosynthesis O-methyltransferase (248 aa).

Residues Arg-41, Gly-72, Asp-93, and Met-136 each contribute to the S-adenosyl-L-methionine site.

It belongs to the methyltransferase superfamily. UbiG/COQ3 family.

It catalyses the reaction a 3-demethylubiquinol + S-adenosyl-L-methionine = a ubiquinol + S-adenosyl-L-homocysteine + H(+). The enzyme catalyses a 3-(all-trans-polyprenyl)benzene-1,2-diol + S-adenosyl-L-methionine = a 2-methoxy-6-(all-trans-polyprenyl)phenol + S-adenosyl-L-homocysteine + H(+). The protein operates within cofactor biosynthesis; ubiquinone biosynthesis. Functionally, O-methyltransferase that catalyzes the 2 O-methylation steps in the ubiquinone biosynthetic pathway. The sequence is that of Ubiquinone biosynthesis O-methyltransferase from Sinorhizobium medicae (strain WSM419) (Ensifer medicae).